The following is a 522-amino-acid chain: Protein DETOXIFICATION 31 (522 aa).

Transmembrane regions (helical) follow at residues 89-109 (GAVT…AVSI), 113-133 (VIAG…ETLC), 154-174 (VILS…APIL), 183-203 (ISAM…AYAI), 217-237 (IMVM…FTWL), 249-269 (LALV…VYIF), 299-319 (AAML…AGYL), 324-344 (VSVA…MVAF), 371-391 (VVAV…LLFF), 415-435 (MLAF…VAVG), 441-461 (VVAY…GLLL), and 471-491 (GIWW…TWMI).

This sequence belongs to the multi antimicrobial extrusion (MATE) (TC 2.A.66.1) family.

It is found in the membrane. Its function is as follows. Positively mediates root hair elongation. The protein is Protein DETOXIFICATION 31 of Arabidopsis thaliana (Mouse-ear cress).